We begin with the raw amino-acid sequence, 608 residues long: MRILLIHSDYLNYNVKNKTPVAEEIEDAKKQGAFDESLVVFTAVEKDDENNPQGIVKNLVKEVIKTNDQVKAENIVLYPYAHLSSSLSSPKVAVQVLKDAEEALDAEGLNVKRVPFGWYKAFEISCKGHPLSELSRTITAEEEEEEEVEKKPSSWSILDGDKIIDIDDFKFENDQLEKLVSYELGTGASDAGEPPHVKLMREKELCDYESASDVGNLKWFPKGRLVRDLLADYVYNLVVDQGAMPIETPIFYDLDNEAINVHAAKFGERQYRTDTKKNLMLRFACCFGAFRVMADPFITWKNLPAKLYELSTYSFRFEKKGEVVGLKRLRAFTMPDFHSFCADMNSTLEEFSKQTDMCIQTGVDLDVNYEIIFRATKDFYDENKDWMYSIGKKIGKPVLLEILPERKHYWSCKIDFAAIDYLGRPIENPTVQIDVESGKRFDITYLGEDGKEHYPTILHCSPTGSIERVICSLLEKTAIELDEKAPMLPTWLSPIEVRIITVGEDHKDFANELYDKINAENIRVDVDDRDESVGKKIRNAATEWIPYIFVVGDNEKESGVFSVTVRETGEKVDMTVDELIKEILDKTKGMPYRGLPLPKDISTRINFQ.

An editing domain region spans residues Met1–Glu144. A catalytic region spans residues Pro195 to Pro489. Cys286, His338, and His459 together coordinate Zn(2+).

The protein belongs to the class-II aminoacyl-tRNA synthetase family. Homodimer. The cofactor is Zn(2+).

Its subcellular location is the cytoplasm. The enzyme catalyses tRNA(Thr) + L-threonine + ATP = L-threonyl-tRNA(Thr) + AMP + diphosphate + H(+). Functionally, catalyzes the attachment of threonine to tRNA(Thr) in a two-step reaction: L-threonine is first activated by ATP to form Thr-AMP and then transferred to the acceptor end of tRNA(Thr). Also edits incorrectly charged L-seryl-tRNA(Thr). The sequence is that of Threonine--tRNA ligase from Methanobrevibacter smithii (strain ATCC 35061 / DSM 861 / OCM 144 / PS).